Here is a 143-residue protein sequence, read N- to C-terminus: Brain ribonuclease (143 aa).

The interval 1-21 (KESAAAKFRRQHMDSGSSSSG) is disordered. K7 and R10 together coordinate substrate. H12 serves as the catalytic Proton acceptor. Disulfide bonds link C26-C84, C40-C95, C58-C110, and C65-C72. 41 to 45 (KPVNT) serves as a coordination point for substrate. The N-linked (GlcNAc...) asparagine glycan is linked to N62. Substrate-binding residues include K66 and R85. The Proton donor role is filled by H119. T129 carries an O-linked (GalNAc...) threonine glycan. S133 carries an O-linked (GalNAc...) serine glycan.

The protein belongs to the pancreatic ribonuclease family.

Its subcellular location is the secreted. The polypeptide is Brain ribonuclease (BRN) (Ovis aries (Sheep)).